We begin with the raw amino-acid sequence, 501 residues long: Probable malate:quinone oxidoreductase (501 aa).

The protein belongs to the MQO family. It depends on FAD as a cofactor.

The catalysed reaction is (S)-malate + a quinone = a quinol + oxaloacetate. Its pathway is carbohydrate metabolism; tricarboxylic acid cycle; oxaloacetate from (S)-malate (quinone route): step 1/1. The sequence is that of Probable malate:quinone oxidoreductase from Paenarthrobacter aurescens (strain TC1).